Reading from the N-terminus, the 471-residue chain is Membrane-associated sulfotransferase kil1 (471 aa).

The Cytoplasmic segment spans residues 1-12; it reads MSTTSMILTKKN. The helical; Signal-anchor for type II membrane protein transmembrane segment at 13–33 threads the bilayer; it reads IIILSIIIITIIAYQFYITSP. Topologically, residues 34–471 are lumenal; sequence QSFPSSNTIT…LLNRDFKWQN (438 aa). An N-linked (GlcNAc...) asparagine glycan is attached at Asn47. Composition is skewed to low complexity over residues 89–105 and 112–127; these read NQNE…NNNK and NNNN…NNNN. The interval 89–127 is disordered; the sequence is NQNENQNQINNEYNNNKLNDEQENNNNNNYNNNNNNNNN. 3'-phosphoadenylyl sulfate-binding positions include 167–172, Arg252, and Ser260; that span reads KSGTTF. Residues Asn324 and Asn344 are each glycosylated (N-linked (GlcNAc...) asparagine). Residue Tyr348 participates in 3'-phosphoadenylyl sulfate binding.

The protein belongs to the sulfotransferase 1 family.

The protein localises to the membrane. Functionally, sulfotransferase involved in intracellular killing of bacteria. This Dictyostelium discoideum (Social amoeba) protein is Membrane-associated sulfotransferase kil1 (kil1).